Here is a 250-residue protein sequence, read N- to C-terminus: Imidazole glycerol phosphate synthase subunit HisF (250 aa).

Catalysis depends on residues aspartate 11 and aspartate 130.

This sequence belongs to the HisA/HisF family. In terms of assembly, heterodimer of HisH and HisF.

It is found in the cytoplasm. It carries out the reaction 5-[(5-phospho-1-deoxy-D-ribulos-1-ylimino)methylamino]-1-(5-phospho-beta-D-ribosyl)imidazole-4-carboxamide + L-glutamine = D-erythro-1-(imidazol-4-yl)glycerol 3-phosphate + 5-amino-1-(5-phospho-beta-D-ribosyl)imidazole-4-carboxamide + L-glutamate + H(+). It functions in the pathway amino-acid biosynthesis; L-histidine biosynthesis; L-histidine from 5-phospho-alpha-D-ribose 1-diphosphate: step 5/9. Functionally, IGPS catalyzes the conversion of PRFAR and glutamine to IGP, AICAR and glutamate. The HisF subunit catalyzes the cyclization activity that produces IGP and AICAR from PRFAR using the ammonia provided by the HisH subunit. This is Imidazole glycerol phosphate synthase subunit HisF from Bacteroides fragilis (strain ATCC 25285 / DSM 2151 / CCUG 4856 / JCM 11019 / LMG 10263 / NCTC 9343 / Onslow / VPI 2553 / EN-2).